We begin with the raw amino-acid sequence, 347 residues long: Dihydroorotate dehydrogenase (quinone) (347 aa).

FMN is bound by residues 65–69 (AGLDK) and T89. Residue K69 participates in substrate binding. 114–118 (NRMGF) is a substrate binding site. Positions 146 and 179 each coordinate FMN. A substrate-binding site is contributed by N179. The active-site Nucleophile is the S182. N184 contributes to the substrate binding site. The FMN site is built by K224 and T252. Substrate is bound at residue 253–254 (NT). Residues G275, G304, and 325–326 (YT) each bind FMN.

The protein belongs to the dihydroorotate dehydrogenase family. Type 2 subfamily. In terms of assembly, monomer. Requires FMN as cofactor.

It localises to the cell membrane. The catalysed reaction is (S)-dihydroorotate + a quinone = orotate + a quinol. It participates in pyrimidine metabolism; UMP biosynthesis via de novo pathway; orotate from (S)-dihydroorotate (quinone route): step 1/1. Functionally, catalyzes the conversion of dihydroorotate to orotate with quinone as electron acceptor. The sequence is that of Dihydroorotate dehydrogenase (quinone) from Herminiimonas arsenicoxydans.